Reading from the N-terminus, the 385-residue chain is Meiotic recombination protein SPO11-2 (385 aa).

In terms of domain architecture, Topo IIA-type catalytic spans 24–169 (LPPAEVRARI…LGIMASSRGA (146 aa)). Residue Y126 is the O-(5'-phospho-DNA)-tyrosine intermediate of the active site. Mg(2+) is bound by residues E219 and D272.

The protein belongs to the TOP6A family. In terms of assembly, interacts with TOP6B. Requires Mg(2+) as cofactor. Highly expressed in flowers before pollination. Expressed in roots and shoots.

It is found in the nucleus. The enzyme catalyses ATP-dependent breakage, passage and rejoining of double-stranded DNA.. In terms of biological role, required for meiotic recombination. Mediates DNA cleavage that forms the double-strand breaks (DSB) that initiate meiotic recombination. The chain is Meiotic recombination protein SPO11-2 (SPO11-2) from Oryza sativa subsp. indica (Rice).